The following is an 88-amino-acid chain: Small ribosomal subunit protein uS15c (88 aa).

The protein belongs to the universal ribosomal protein uS15 family. In terms of assembly, part of the 30S ribosomal subunit.

It is found in the plastid. It localises to the chloroplast. The sequence is that of Small ribosomal subunit protein uS15c (rps15) from Capsella bursa-pastoris (Shepherd's purse).